We begin with the raw amino-acid sequence, 71 residues long: Cytochrome c oxidase subunit 8C, mitochondrial (71 aa).

A mitochondrion-targeting transit peptide spans 1–28 (MAHLPRVCPFIRRLRVALLCLRPGHRFA). At 29–39 (HSEPQRQRPAS) the chain is on the mitochondrial matrix side. Residues 40–63 (ALEMAVGIVVIFSAFLTPSAYVLS) form a helical membrane-spanning segment. Topologically, residues 64-71 (NLSQFRRE) are mitochondrial intermembrane.

The protein belongs to the cytochrome c oxidase VIII family. As to quaternary structure, component of the cytochrome c oxidase (complex IV, CIV), a multisubunit enzyme composed of 14 subunits. The complex is composed of a catalytic core of 3 subunits MT-CO1, MT-CO2 and MT-CO3, encoded in the mitochondrial DNA, and 11 supernumerary subunits COX4I, COX5A, COX5B, COX6A, COX6B, COX6C, COX7A, COX7B, COX7C, COX8 and NDUFA4, which are encoded in the nuclear genome. The complex exists as a monomer or a dimer and forms supercomplexes (SCs) in the inner mitochondrial membrane with NADH-ubiquinone oxidoreductase (complex I, CI) and ubiquinol-cytochrome c oxidoreductase (cytochrome b-c1 complex, complex III, CIII), resulting in different assemblies (supercomplex SCI(1)III(2)IV(1) and megacomplex MCI(2)III(2)IV(2)).

The protein resides in the mitochondrion inner membrane. It functions in the pathway energy metabolism; oxidative phosphorylation. Component of the cytochrome c oxidase, the last enzyme in the mitochondrial electron transport chain which drives oxidative phosphorylation. The respiratory chain contains 3 multisubunit complexes succinate dehydrogenase (complex II, CII), ubiquinol-cytochrome c oxidoreductase (cytochrome b-c1 complex, complex III, CIII) and cytochrome c oxidase (complex IV, CIV), that cooperate to transfer electrons derived from NADH and succinate to molecular oxygen, creating an electrochemical gradient over the inner membrane that drives transmembrane transport and the ATP synthase. Cytochrome c oxidase is the component of the respiratory chain that catalyzes the reduction of oxygen to water. Electrons originating from reduced cytochrome c in the intermembrane space (IMS) are transferred via the dinuclear copper A center (CU(A)) of subunit 2 and heme A of subunit 1 to the active site in subunit 1, a binuclear center (BNC) formed by heme A3 and copper B (CU(B)). The BNC reduces molecular oxygen to 2 water molecules using 4 electrons from cytochrome c in the IMS and 4 protons from the mitochondrial matrix. This chain is Cytochrome c oxidase subunit 8C, mitochondrial (COX8C), found in Eulemur fulvus fulvus (Brown lemur).